A 64-amino-acid polypeptide reads, in one-letter code: Large ribosomal subunit protein bL35 (64 aa).

Residues 1 to 31 are disordered; the sequence is MPKMKTHSGAKKRFKLTGTGKLKRQQANRRH.

The protein belongs to the bacterial ribosomal protein bL35 family.

This Paenarthrobacter aurescens (strain TC1) protein is Large ribosomal subunit protein bL35.